A 113-amino-acid chain; its full sequence is uncharacterized protein (113 aa).

Residues 1–14 (MATRNALRIVSRRF) constitute a mitochondrion transit peptide. A disordered region spans residues 41–79 (QKLARQGPGEQAAGSASEAKVAGATASASAESGPKVSED). Over residues 55–73 (SASEAKVAGATASASAESG) the composition is skewed to low complexity.

Its subcellular location is the mitochondrion. This is an uncharacterized protein from Arabidopsis thaliana (Mouse-ear cress).